The primary structure comprises 99 residues: Large ribosomal subunit protein bL27 (99 aa).

Positions 1–9 (MLIMNLQLF) are excised as a propeptide.

The protein belongs to the bacterial ribosomal protein bL27 family. In terms of processing, the N-terminus is cleaved by ribosomal processing cysteine protease Prp.

This Clostridium botulinum (strain Eklund 17B / Type B) protein is Large ribosomal subunit protein bL27.